A 667-amino-acid polypeptide reads, in one-letter code: Single-minded homolog 2 (667 aa).

The region spanning 1–53 (MKEKSKNAAKTRREKENGEFYELAKLLPLPSAITSQLDKASIIRLTTSYLKMR) is the bHLH domain. PAS domains are found at residues 77–149 (AKEL…LHHH) and 218–288 (PPSA…LVKG). The region spanning 292-335 (TKYYRLLSKRGGWVWVQSYATVVHNSRSSRPHCIVSVNYVLTEI) is the PAC domain. One can recognise a Single-minded C-terminal domain in the interval 336–667 (EYKELQLSLE…GASVIITNGR (332 aa)). Disordered regions lie at residues 356–389 (WRTA…YPPQ), 409–428 (ASPP…SESS), and 500–520 (SSSS…RHSL). The Nuclear localization signal motif lies at 367–386 (RKLVKPKNTKMKTKLRTNPY). Residues 369–381 (LVKPKNTKMKTKL) show a composition bias toward basic residues. A compositionally biased stretch (low complexity) spans 409-419 (ASPPASAAAPP).

In terms of assembly, efficient DNA binding requires dimerization with another bHLH protein. Heterodimer of SIM2 and ARNT.

The protein resides in the nucleus. In terms of biological role, transcription factor that may be a master gene of CNS development in cooperation with Arnt. It may have pleiotropic effects in the tissues expressed during development. In Homo sapiens (Human), this protein is Single-minded homolog 2 (SIM2).